A 335-amino-acid polypeptide reads, in one-letter code: MQQLIHRIWYQGHQAKWLLLPLSGIFWFISYIRRLLFSFGFKQAQVLPVPVIVVGNITAGGSGKTPTVIYLIELLRQHGYKPGVISRGYGVNVDGVVAVTPNAKASDVGDEPAMIVARTQVPMVVGAKRVSAAQTLLTDFDVDVIISDDGLQHYALGRDIEIALVDGERRYGNHCLLPAGPLREGLWRLNSVDFVINNGGPAQNGEVLMALEPAPLCLVDNNLQDKFNQQNSVVAMAGIGNPQRFFNSISQLGYKVVKTVEFADHQAFDQKQLSDLSVQHSLLMTEKDAVKCRDFAQSNWWYLPVNAKLNSEFDHALLSQLQQVAQTKKGLSHGI.

Thr-58–Thr-65 is a binding site for ATP.

It belongs to the LpxK family.

It catalyses the reaction a lipid A disaccharide + ATP = a lipid IVA + ADP + H(+). Its pathway is glycolipid biosynthesis; lipid IV(A) biosynthesis; lipid IV(A) from (3R)-3-hydroxytetradecanoyl-[acyl-carrier-protein] and UDP-N-acetyl-alpha-D-glucosamine: step 6/6. Functionally, transfers the gamma-phosphate of ATP to the 4'-position of a tetraacyldisaccharide 1-phosphate intermediate (termed DS-1-P) to form tetraacyldisaccharide 1,4'-bis-phosphate (lipid IVA). The protein is Tetraacyldisaccharide 4'-kinase of Shewanella frigidimarina (strain NCIMB 400).